The following is a 120-amino-acid chain: Large ribosomal subunit protein uL18 (120 aa).

The tract at residues 1 to 26 is disordered; the sequence is MKLTRRESKQRRHRRVRGKVQGSPER. Positions 8 to 18 are enriched in basic residues; sequence SKQRRHRRVRG.

This sequence belongs to the universal ribosomal protein uL18 family. Part of the 50S ribosomal subunit; part of the 5S rRNA/L5/L18/L25 subcomplex. Contacts the 5S and 23S rRNAs.

Functionally, this is one of the proteins that bind and probably mediate the attachment of the 5S RNA into the large ribosomal subunit, where it forms part of the central protuberance. In Trichormus variabilis (strain ATCC 29413 / PCC 7937) (Anabaena variabilis), this protein is Large ribosomal subunit protein uL18.